Here is a 441-residue protein sequence, read N- to C-terminus: Probable dihydroorotase-like protein (441 aa).

A disordered region spans residues 121–140 (VNAHHQPPGDPQAENRPDSA).

This sequence belongs to the metallo-dependent hydrolases superfamily. DHOase family. PyrC' subfamily.

Functionally, non-functional DHOase. The polypeptide is Probable dihydroorotase-like protein (pyrC') (Synechocystis sp. (strain ATCC 27184 / PCC 6803 / Kazusa)).